The following is a 339-amino-acid chain: Dihydroorotate dehydrogenase (quinone) (339 aa).

FMN is bound by residues 62-66 (AGMDK) and Thr-86. Lys-66 contributes to the substrate binding site. 111-115 (NRMGF) is a substrate binding site. Asn-139 and Asn-172 together coordinate FMN. Residue Asn-172 coordinates substrate. Residue Ser-175 is the Nucleophile of the active site. Residue Asn-177 coordinates substrate. Residues Lys-217 and Thr-245 each contribute to the FMN site. 246–247 (NT) serves as a coordination point for substrate. FMN-binding positions include Gly-268, Gly-297, and 318–319 (YS).

This sequence belongs to the dihydroorotate dehydrogenase family. Type 2 subfamily. In terms of assembly, monomer. It depends on FMN as a cofactor.

The protein resides in the cell membrane. The catalysed reaction is (S)-dihydroorotate + a quinone = orotate + a quinol. It functions in the pathway pyrimidine metabolism; UMP biosynthesis via de novo pathway; orotate from (S)-dihydroorotate (quinone route): step 1/1. Functionally, catalyzes the conversion of dihydroorotate to orotate with quinone as electron acceptor. This is Dihydroorotate dehydrogenase (quinone) from Shewanella sp. (strain MR-4).